The sequence spans 629 residues: Kelch-like protein 13 (629 aa).

The BTB domain occupies 66-135 (CDVTLVPGDG…IYTAKLSLNM (70 aa)). One can recognise a BACK domain in the interval 170 to 271 (CVEVGRIANT…TPQDLINYVQ (102 aa)). Kelch repeat units lie at residues 315-363 (HLVT…VIGN), 364-415 (FLYV…ALKG), 416-462 (HLYA…VYGG), 464-509 (MYIS…TVGD), 511-561 (LYVI…VFEN), and 562-610 (KIYV…TLTV).

In terms of assembly, component of the BCR(KLHL9-KLHL13) E3 ubiquitin ligase complex, at least composed of CUL3, KLHL9, KLHL13 and RBX1. Interacts with AURKB.

Its pathway is protein modification; protein ubiquitination. Substrate-specific adapter of a BCR (BTB-CUL3-RBX1) E3 ubiquitin-protein ligase complex required for mitotic progression and cytokinesis. The BCR(KLHL9-KLHL13) E3 ubiquitin ligase complex mediates the ubiquitination of AURKB and controls the dynamic behavior of AURKB on mitotic chromosomes and thereby coordinates faithful mitotic progression and completion of cytokinesis. This chain is Kelch-like protein 13 (KLHL13), found in Gallus gallus (Chicken).